The sequence spans 97 residues: Citrate lyase acyl carrier protein (97 aa).

Ser14 bears the O-(phosphoribosyl dephospho-coenzyme A)serine mark.

The protein belongs to the CitD family. As to quaternary structure, oligomer with a subunit composition of (alpha,beta,gamma)6.

The protein localises to the cytoplasm. In terms of biological role, covalent carrier of the coenzyme of citrate lyase. The protein is Citrate lyase acyl carrier protein of Klebsiella pneumoniae subsp. pneumoniae (strain ATCC 700721 / MGH 78578).